The chain runs to 122 residues: Large ribosomal subunit protein uL18 (122 aa).

The tract at residues 1 to 27 is disordered; sequence MATLSKKQQTQKRHKRLRRHLNGTNHR. Basic residues predominate over residues 9-27; that stretch reads QTQKRHKRLRRHLNGTNHR.

This sequence belongs to the universal ribosomal protein uL18 family. As to quaternary structure, part of the 50S ribosomal subunit; part of the 5S rRNA/L5/L18/L25 subcomplex. Contacts the 5S and 23S rRNAs.

This is one of the proteins that bind and probably mediate the attachment of the 5S RNA into the large ribosomal subunit, where it forms part of the central protuberance. The sequence is that of Large ribosomal subunit protein uL18 from Prochlorococcus marinus (strain MIT 9211).